Here is a 273-residue protein sequence, read N- to C-terminus: Undecaprenyl-diphosphatase (273 aa).

Transmembrane regions (helical) follow at residues 3–23 (IILW…EFLP), 47–67 (ALDA…WQDI), 90–110 (LLLG…LLKL), 120–140 (IIAT…QWGS), 148–168 (IGIL…LPGA), 186–206 (PTAA…ATLV), 217–237 (LLIP…LAIA), and 249–269 (WVFI…IALG).

It belongs to the UppP family.

The protein localises to the cell inner membrane. The enzyme catalyses di-trans,octa-cis-undecaprenyl diphosphate + H2O = di-trans,octa-cis-undecaprenyl phosphate + phosphate + H(+). Functionally, catalyzes the dephosphorylation of undecaprenyl diphosphate (UPP). Confers resistance to bacitracin. This is Undecaprenyl-diphosphatase from Thermosynechococcus vestitus (strain NIES-2133 / IAM M-273 / BP-1).